A 110-amino-acid chain; its full sequence is Small ribosomal subunit protein uS10 (110 aa).

It belongs to the universal ribosomal protein uS10 family. As to quaternary structure, part of the 30S ribosomal subunit.

Its function is as follows. Involved in the binding of tRNA to the ribosomes. The chain is Small ribosomal subunit protein uS10 from Coxiella burnetii (strain Dugway 5J108-111).